The sequence spans 92 residues: Protein S100-B (92 aa).

Serine 2 is subject to N-acetylserine. 2 EF-hand domains span residues 13-48 (DVFHQYSGREGDKHKLKKSELKELINNELSHFLEEI) and 49-84 (KEQEVVDKVMETLDEDGDGECDFQEFMAFVAMVTTA). A Zn(2+)-binding site is contributed by histidine 16. Ca(2+) contacts are provided by serine 19, glutamate 22, and aspartate 24. Residue histidine 26 coordinates Zn(2+). Ca(2+) is bound by residues aspartate 62, aspartate 64, aspartate 66, glutamate 68, and glutamate 73. The Zn(2+) site is built by histidine 86 and histidine 91.

Belongs to the S-100 family. In terms of assembly, dimer of either two alpha chains, or two beta chains, or one alpha and one beta chain. The S100B dimer binds two molecules of STK38. Interacts with CACYBP in a calcium-dependent manner. Interacts with ATAD3A; this interaction probably occurs in the cytosol prior to ATAD3A mitochondrial targeting. Interacts with S100A6. The S100B dimer interacts with two molecules of CAPZA1. Interacts with AGER. Interacts with PPP5C (via TPR repeats); the interaction is calcium-dependent and modulates PPP5C activity. Interacts with TPPP; this interaction inhibits TPPP dimerization. Interacts with isoform CLSTN3beta of CLSTN3; interaction promotes secretion.

The protein localises to the cytoplasm. It is found in the nucleus. It localises to the secreted. Small zinc- and- and calcium-binding protein that is highly expressed in astrocytes and constitutes one of the most abundant soluble proteins in brain. Weakly binds calcium but binds zinc very tightly-distinct binding sites with different affinities exist for both ions on each monomer. Physiological concentrations of potassium ion antagonize the binding of both divalent cations, especially affecting high-affinity calcium-binding sites. Acts as a neurotrophic factor that promotes astrocytosis and axonal proliferation. Involved in innervation of thermogenic adipose tissue by acting as an adipocyte-derived neurotrophic factor that promotes sympathetic innervation of adipose tissue. Binds to and initiates the activation of STK38 by releasing autoinhibitory intramolecular interactions within the kinase. Interaction with AGER after myocardial infarction may play a role in myocyte apoptosis by activating ERK1/2 and p53/TP53 signaling. Could assist ATAD3A cytoplasmic processing, preventing aggregation and favoring mitochondrial localization. May mediate calcium-dependent regulation on many physiological processes by interacting with other proteins, such as TPR-containing proteins, and modulating their activity. The sequence is that of Protein S100-B from Mus musculus (Mouse).